Here is a 157-residue protein sequence, read N- to C-terminus: Serine-protein kinase RsbW (157 aa).

It belongs to the anti-sigma-factor family.

The catalysed reaction is L-seryl-[protein] + ATP = O-phospho-L-seryl-[protein] + ADP + H(+). The enzyme catalyses L-threonyl-[protein] + ATP = O-phospho-L-threonyl-[protein] + ADP + H(+). Its function is as follows. Negative regulator of sigma-B activity. Phosphorylates and inactivates its specific antagonist protein, RsbV. Upon phosphorylation of RsbV, RsbW is released and binds to sigma-B, thereby blocking its ability to form an RNA polymerase holoenzyme (E-sigma-B). The sequence is that of Serine-protein kinase RsbW from Listeria monocytogenes serotype 4b (strain CLIP80459).